The following is a 303-amino-acid chain: Coenzyme PQQ synthesis protein B (303 aa).

It belongs to the PqqB family.

It participates in cofactor biosynthesis; pyrroloquinoline quinone biosynthesis. May be involved in the transport of PQQ or its precursor to the periplasm. The protein is Coenzyme PQQ synthesis protein B of Pseudomonas putida (strain GB-1).